A 467-amino-acid chain; its full sequence is ATP synthase subunit beta (467 aa).

150–157 (GGAGVGKT) lines the ATP pocket.

It belongs to the ATPase alpha/beta chains family. In terms of assembly, F-type ATPases have 2 components, CF(1) - the catalytic core - and CF(0) - the membrane proton channel. CF(1) has five subunits: alpha(3), beta(3), gamma(1), delta(1), epsilon(1). CF(0) has three main subunits: a(1), b(2) and c(9-12). The alpha and beta chains form an alternating ring which encloses part of the gamma chain. CF(1) is attached to CF(0) by a central stalk formed by the gamma and epsilon chains, while a peripheral stalk is formed by the delta and b chains.

The protein resides in the cell inner membrane. It catalyses the reaction ATP + H2O + 4 H(+)(in) = ADP + phosphate + 5 H(+)(out). In terms of biological role, produces ATP from ADP in the presence of a proton gradient across the membrane. The catalytic sites are hosted primarily by the beta subunits. The polypeptide is ATP synthase subunit beta (Polaromonas sp. (strain JS666 / ATCC BAA-500)).